The chain runs to 155 residues: Large ribosomal subunit protein uL13 (155 aa).

It belongs to the universal ribosomal protein uL13 family. Part of the 50S ribosomal subunit.

Functionally, this protein is one of the early assembly proteins of the 50S ribosomal subunit, although it is not seen to bind rRNA by itself. It is important during the early stages of 50S assembly. The protein is Large ribosomal subunit protein uL13 of Rickettsia typhi (strain ATCC VR-144 / Wilmington).